The sequence spans 357 residues: 3-isopropylmalate dehydrogenase (357 aa).

76 to 89 (GYQWESLDISVRPE) lines the NAD(+) pocket. Arg96, Arg106, Arg134, and Asp224 together coordinate substrate. The Mg(2+) site is built by Asp224, Asp248, and Asp252. Residue 282-294 (GSAPDIAGQNIAN) coordinates NAD(+).

Belongs to the isocitrate and isopropylmalate dehydrogenases family. LeuB type 1 subfamily. In terms of assembly, homodimer. Mg(2+) serves as cofactor. Requires Mn(2+) as cofactor.

It is found in the cytoplasm. It carries out the reaction (2R,3S)-3-isopropylmalate + NAD(+) = 4-methyl-2-oxopentanoate + CO2 + NADH. It participates in amino-acid biosynthesis; L-leucine biosynthesis; L-leucine from 3-methyl-2-oxobutanoate: step 3/4. In terms of biological role, catalyzes the oxidation of 3-carboxy-2-hydroxy-4-methylpentanoate (3-isopropylmalate) to 3-carboxy-4-methyl-2-oxopentanoate. The product decarboxylates to 4-methyl-2 oxopentanoate. The protein is 3-isopropylmalate dehydrogenase of Hydrogenovibrio crunogenus (strain DSM 25203 / XCL-2) (Thiomicrospira crunogena).